Reading from the N-terminus, the 766-residue chain is 5-methyltetrahydropteroyltriglutamate--homocysteine methyltransferase (766 aa).

Residues R16–K19 and K124 contribute to the 5-methyltetrahydropteroyltri-L-glutamate site. L-homocysteine is bound by residues I445–S447 and E498. Residues I445–S447 and E498 contribute to the L-methionine site. 5-methyltetrahydropteroyltri-L-glutamate contacts are provided by residues R529–C530 and W575. An L-homocysteine-binding site is contributed by D613. D613 contacts L-methionine. Residue E619 participates in 5-methyltetrahydropteroyltri-L-glutamate binding. Residues H655, C657, and E679 each coordinate Zn(2+). H708 acts as the Proton donor in catalysis. A Zn(2+)-binding site is contributed by C740.

The protein belongs to the vitamin-B12 independent methionine synthase family. It depends on Zn(2+) as a cofactor.

The catalysed reaction is 5-methyltetrahydropteroyltri-L-glutamate + L-homocysteine = tetrahydropteroyltri-L-glutamate + L-methionine. The protein operates within amino-acid biosynthesis; L-methionine biosynthesis via de novo pathway; L-methionine from L-homocysteine (MetE route): step 1/1. Functionally, catalyzes the transfer of a methyl group from 5-methyltetrahydrofolate to homocysteine resulting in methionine formation. The chain is 5-methyltetrahydropteroyltriglutamate--homocysteine methyltransferase from Pseudomonas syringae pv. tomato (strain ATCC BAA-871 / DC3000).